Here is a 144-residue protein sequence, read N- to C-terminus: 3-dehydroquinate dehydratase (144 aa).

Tyrosine 23 serves as the catalytic Proton acceptor. Residues asparagine 74, histidine 80, and aspartate 87 each contribute to the substrate site. Histidine 101 acts as the Proton donor in catalysis. Substrate-binding positions include 102-103 (LS) and arginine 112.

Belongs to the type-II 3-dehydroquinase family. In terms of assembly, homododecamer.

The enzyme catalyses 3-dehydroquinate = 3-dehydroshikimate + H2O. Its pathway is metabolic intermediate biosynthesis; chorismate biosynthesis; chorismate from D-erythrose 4-phosphate and phosphoenolpyruvate: step 3/7. In terms of biological role, catalyzes a trans-dehydration via an enolate intermediate. The protein is 3-dehydroquinate dehydratase of Mesorhizobium japonicum (strain LMG 29417 / CECT 9101 / MAFF 303099) (Mesorhizobium loti (strain MAFF 303099)).